The chain runs to 376 residues: RCC1 domain-containing protein 1 (376 aa).

Positions 1–169 (MAEERPGAWF…ARQLELGAEH (169 aa)) are interaction with KDM8. The stretch at 6–56 (PGAWFGFGFCGFGQELGSGRGRQVHSPSPLRAGVDICRVSASWSYTAFVTR) is one RCC1 1 repeat. Arg-141 is subject to (3R)-3-hydroxyarginine. RCC1 repeat units lie at residues 176–227 (AGQV…CVSE), 229–317 (GDIY…VVTR), and 318–371 (TGEL…VYAV).

As to quaternary structure, found in a complex with KDM8. Interacts (via N-terminus) with KDM8 (via N-terminus). Specifically hydroxylated (with R stereochemistry) at C-3 of ARG-141 by KDM8.

The protein localises to the chromosome. Its function is as follows. Plays a role in transcriptional repression of satellite repeats, possibly by regulating H3K36 methylation levels in centromeric regions together with KDM8. Possibly together with KDM8, is involved in proper mitotic spindle organization and chromosome segregation. Plays a role in regulating alpha-tubulin deacetylation and cytoskeletal microtubule stability, thereby promoting cell migration and TGF-beta-induced epithelial to mesenchymal transition (EMT), potentially through the inhibition of KDM8. This is RCC1 domain-containing protein 1 from Homo sapiens (Human).